We begin with the raw amino-acid sequence, 523 residues long: Arabinose import ATP-binding protein AraG (523 aa).

ABC transporter domains lie at 20-255 (LAFR…MVGR) and 268-511 (IGSE…MLRT). 52–59 (GENGAGKS) contacts ATP.

Belongs to the ABC transporter superfamily. Arabinose importer (TC 3.A.1.2.2) family. In terms of assembly, the complex is composed of two ATP-binding proteins (AraG), two transmembrane proteins (AraH) and a solute-binding protein (AraF).

It is found in the cell inner membrane. It catalyses the reaction L-arabinose(out) + ATP + H2O = L-arabinose(in) + ADP + phosphate + H(+). Its function is as follows. Part of the ABC transporter complex AraFGH involved in arabinose import. Responsible for energy coupling to the transport system. The protein is Arabinose import ATP-binding protein AraG of Yersinia pestis bv. Antiqua (strain Antiqua).